Reading from the N-terminus, the 382-residue chain is Mucosal addressin cell adhesion molecule 1 (382 aa).

An N-terminal signal peptide occupies residues M1 to G18. Topologically, residues Q19–Q317 are extracellular. 2 consecutive Ig-like domains span residues V23 to Y112 and A113 to E231. Intrachain disulfides connect C47–C94, C51–C98, and C134–C204. A glycan (N-linked (GlcNAc...) asparagine) is linked at N83. A disordered region spans residues V223–A314. The segment at S226–Q317 is mucin-like. One copy of the 1; truncated repeat lies at T228 to E231. A 5.5 X 8 AA tandem repeats of [PS]-P-D-T-T-S-[QP]-E region spans residues T228–E271. A run of 5 repeats spans residues P232–E239, S240–E247, S248–E255, P256–E263, and P264–E271. Positions T236–S261 are enriched in low complexity. Over residues G277 to T288 the composition is skewed to low complexity. The helical transmembrane segment at L318 to T338 threads the bilayer. Topologically, residues Y339–S382 are cytoplasmic.

As to quaternary structure, homodimer. Post-translationally, the Ser/Thr-rich mucin-like domain may provide possible sites for O-glycosylation. In terms of tissue distribution, highly expressed on high endothelial venules (HEV) and lamina propia venules found in the small intestine, and to a lesser extent in the colon and spleen. Very low levels of expression found in pancreas and brain. Not expressed in the thymus, prostate, ovaries, testis, heart, placenta, lung, liver, skeletal muscle, kidney or peripheral blood leukocytes.

Its subcellular location is the membrane. Its function is as follows. Cell adhesion leukocyte receptor expressed by mucosal venules, helps to direct lymphocyte traffic into mucosal tissues including the Peyer patches and the intestinal lamina propria. It can bind both integrin alpha-4/beta-7 and L-selectin, regulating both the passage and retention of leukocytes. Isoform 2, lacking the mucin-like domain, may be specialized in supporting integrin alpha-4/beta-7-dependent adhesion strengthening, independent of L-selectin binding. The polypeptide is Mucosal addressin cell adhesion molecule 1 (MADCAM1) (Homo sapiens (Human)).